Reading from the N-terminus, the 509-residue chain is Tyrosine-protein kinase STK (509 aa).

Polar residues predominate over residues 1 to 16; the sequence is MGPCCSKQTKALNNQP. The disordered stretch occupies residues 1–23; the sequence is MGPCCSKQTKALNNQPDKSKSKD. Gly2 carries the N-myristoyl glycine lipid modification. In terms of domain architecture, SH3 spans 59–120; that stretch reads PGVTIFVALY…PSTYVAPEKS (62 aa). Residues 126 to 218 form the SH2 domain; the sequence is WYFGDVKRAE…GLVCALTLPC (93 aa). One can recognise a Protein kinase domain in the interval 240 to 495; the sequence is LRLNRKLGAG…LQGVLEDYFV (256 aa). Residues 246-254 and Lys268 each bind ATP; that span reads LGAGQFGEV. Asp360 functions as the Proton acceptor in the catalytic mechanism. Tyr390 is modified (phosphotyrosine; by autocatalysis).

The protein belongs to the protein kinase superfamily. Tyr protein kinase family. SRC subfamily.

The catalysed reaction is L-tyrosyl-[protein] + ATP = O-phospho-L-tyrosyl-[protein] + ADP + H(+). This Hydra vulgaris (Hydra) protein is Tyrosine-protein kinase STK (STK).